Reading from the N-terminus, the 158-residue chain is S-ribosylhomocysteine lyase (158 aa).

Fe cation is bound by residues His-57, His-61, and Cys-125.

The protein belongs to the LuxS family. Homodimer. Fe cation serves as cofactor.

It catalyses the reaction S-(5-deoxy-D-ribos-5-yl)-L-homocysteine = (S)-4,5-dihydroxypentane-2,3-dione + L-homocysteine. Its function is as follows. Involved in the synthesis of autoinducer 2 (AI-2) which is secreted by bacteria and is used to communicate both the cell density and the metabolic potential of the environment. The regulation of gene expression in response to changes in cell density is called quorum sensing. Catalyzes the transformation of S-ribosylhomocysteine (RHC) to homocysteine (HC) and 4,5-dihydroxy-2,3-pentadione (DPD). The chain is S-ribosylhomocysteine lyase from Deinococcus radiodurans (strain ATCC 13939 / DSM 20539 / JCM 16871 / CCUG 27074 / LMG 4051 / NBRC 15346 / NCIMB 9279 / VKM B-1422 / R1).